A 484-amino-acid polypeptide reads, in one-letter code: ATP synthase subunit beta, chloroplastic (484 aa).

Position 163–170 (163–170 (GGAGVGKT)) interacts with ATP.

It belongs to the ATPase alpha/beta chains family. As to quaternary structure, F-type ATPases have 2 components, CF(1) - the catalytic core - and CF(0) - the membrane proton channel. CF(1) has five subunits: alpha(3), beta(3), gamma(1), delta(1), epsilon(1). CF(0) has four main subunits: a(1), b(1), b'(1) and c(9-12).

Its subcellular location is the plastid. The protein resides in the chloroplast thylakoid membrane. It catalyses the reaction ATP + H2O + 4 H(+)(in) = ADP + phosphate + 5 H(+)(out). Produces ATP from ADP in the presence of a proton gradient across the membrane. The catalytic sites are hosted primarily by the beta subunits. The protein is ATP synthase subunit beta, chloroplastic of Stigeoclonium helveticum (Green alga).